A 512-amino-acid chain; its full sequence is Maturase K (512 aa).

It belongs to the intron maturase 2 family. MatK subfamily.

The protein localises to the plastid. It localises to the chloroplast. Usually encoded in the trnK tRNA gene intron. Probably assists in splicing its own and other chloroplast group II introns. The protein is Maturase K of Oenothera argillicola (Appalachian evening primrose).